The primary structure comprises 398 residues: Elongation factor Tu (398 aa).

In terms of domain architecture, tr-type G spans 10-207 (KPHVNIGTIG…TVDEYIPEPE (198 aa)). The G1 stretch occupies residues 19–26 (GHVDHGKT). Residue 19 to 26 (GHVDHGKT) participates in GTP binding. Residue threonine 26 coordinates Mg(2+). Positions 63 to 67 (GITIN) are G2. The segment at 84-87 (DAPG) is G3. Residues 84 to 88 (DAPGH) and 139 to 142 (NKVD) contribute to the GTP site. The G4 stretch occupies residues 139 to 142 (NKVD). Residues 177-179 (SAL) form a G5 region.

This sequence belongs to the TRAFAC class translation factor GTPase superfamily. Classic translation factor GTPase family. EF-Tu/EF-1A subfamily. As to quaternary structure, monomer.

It is found in the cytoplasm. The enzyme catalyses GTP + H2O = GDP + phosphate + H(+). In terms of biological role, GTP hydrolase that promotes the GTP-dependent binding of aminoacyl-tRNA to the A-site of ribosomes during protein biosynthesis. In Streptococcus sanguinis (strain SK36), this protein is Elongation factor Tu.